Reading from the N-terminus, the 148-residue chain is Transcription antitermination protein NusB (148 aa).

This sequence belongs to the NusB family.

Functionally, involved in transcription antitermination. Required for transcription of ribosomal RNA (rRNA) genes. Binds specifically to the boxA antiterminator sequence of the ribosomal RNA (rrn) operons. The protein is Transcription antitermination protein NusB of Nitrosococcus oceani (strain ATCC 19707 / BCRC 17464 / JCM 30415 / NCIMB 11848 / C-107).